The sequence spans 105 residues: Met repressor (105 aa).

This sequence belongs to the MetJ family. In terms of assembly, homodimer.

It is found in the cytoplasm. Its function is as follows. This regulatory protein, when combined with SAM (S-adenosylmethionine) represses the expression of the methionine regulon and of enzymes involved in SAM synthesis. In Photorhabdus laumondii subsp. laumondii (strain DSM 15139 / CIP 105565 / TT01) (Photorhabdus luminescens subsp. laumondii), this protein is Met repressor.